The chain runs to 500 residues: MNDFPWLTIIVGFPISAGSLMLFLPHKGNKVNKWYTICICILELLITTYAFCYNFKMDDPLIQMSEDYKWINFFDFYWRLGIDGLSIGTILLTGFITTLAALAAFPVTRDSRFFHFLMLAMYSGQIGSFSSRDLLLFFIMWELELIPVYLLLSMWGGKKRLYSATKFILYTAGSSIFLLIGVLGISLYGSNEPTLNLELLANQSYPVTLEILFYIGFLIAFAVKSPIIPLHTWLPDTHGEAHYSTCMLLAGILLKMGAYGLVRINMELLPHAHSMFSPWLMVVGTIQIIYAASTSPGQRNLKKRIAYSSVSHMGFIIIGIGSITDPGLNGAILQIISHGFIGAALFFLAGTSYDRIRLIYLDEMGGTAISIPKIFTMFTILSMASLALPGMSGFVAELIVFFGIITSQKYFLISKILIIFVMAIGMILTPIYLLSMSRQMFYGYKLINVKNLSFFDSGPRELFLSISILLPIIGIGIYPDFVLSLASDKVESILSNYFYG.

14 consecutive transmembrane segments (helical) span residues 4–24 (FPWL…MLFL), 35–55 (YTIC…CYNF), 87–107 (IGTI…AFPV), 113–130 (FFHF…GSFS), 134–154 (LLLF…LLSM), 167–187 (FILY…GISL), 211–231 (ILFY…IPLH), 242–262 (HYST…YGLV), 272–292 (AHSM…IYAA), 305–325 (IAYS…SITD), 330–350 (GAIL…FLAG), 386–406 (LALP…GIIT), 416–436 (ILII…LLSM), and 462–482 (LFLS…PDFV).

This sequence belongs to the complex I subunit 4 family.

The protein resides in the plastid. The protein localises to the chloroplast thylakoid membrane. The catalysed reaction is a plastoquinone + NADH + (n+1) H(+)(in) = a plastoquinol + NAD(+) + n H(+)(out). The enzyme catalyses a plastoquinone + NADPH + (n+1) H(+)(in) = a plastoquinol + NADP(+) + n H(+)(out). The chain is NAD(P)H-quinone oxidoreductase chain 4, chloroplastic from Arabis hirsuta (Hairy rock-cress).